A 644-amino-acid polypeptide reads, in one-letter code: Protein FAM149B1 (644 aa).

Disordered regions lie at residues 392–490, 551–575, and 609–644; these read NQSD…NTLL, TFRS…RPGR, and GHFP…RPGL. Over residues 395–404 the composition is skewed to basic and acidic residues; sequence DCRDSEDKVS. Residues 449 to 459 show a composition bias toward polar residues; sequence PITSSVTQPIT. A compositionally biased stretch (polar residues) spans 626–644; that stretch reads QARSHNRGGSTARSSRPGL.

This sequence belongs to the FAM149 family.

This is Protein FAM149B1 (fam149b1) from Danio rerio (Zebrafish).